An 858-amino-acid chain; its full sequence is Leucine--tRNA ligase (858 aa).

Positions 42–52 (PYPSGNLHMGH) match the 'HIGH' region motif. Polar residues predominate over residues 584–594 (NPNRSDSSRYI). Residues 584–611 (NPNRSDSSRYIPSNLVDPNDPKDPETGE) are disordered. The 'KMSKS' region signature appears at 619 to 623 (TMSKS). Lys622 provides a ligand contact to ATP.

This sequence belongs to the class-I aminoacyl-tRNA synthetase family.

It is found in the cytoplasm. The enzyme catalyses tRNA(Leu) + L-leucine + ATP = L-leucyl-tRNA(Leu) + AMP + diphosphate. The sequence is that of Leucine--tRNA ligase from Cyanothece sp. (strain PCC 7425 / ATCC 29141).